The chain runs to 174 residues: ATP-dependent protease subunit HslV (174 aa).

T2 is a catalytic residue. Na(+) is bound by residues G157, C160, and T163.

Belongs to the peptidase T1B family. HslV subfamily. As to quaternary structure, a double ring-shaped homohexamer of HslV is capped on each side by a ring-shaped HslU homohexamer. The assembly of the HslU/HslV complex is dependent on binding of ATP.

The protein localises to the cytoplasm. The catalysed reaction is ATP-dependent cleavage of peptide bonds with broad specificity.. Its activity is regulated as follows. Allosterically activated by HslU binding. In terms of biological role, protease subunit of a proteasome-like degradation complex believed to be a general protein degrading machinery. This Cellvibrio japonicus (strain Ueda107) (Pseudomonas fluorescens subsp. cellulosa) protein is ATP-dependent protease subunit HslV.